Consider the following 2157-residue polypeptide: Genome polyprotein (2157 aa).

A lipid anchor (N-myristoyl glycine; by host) is attached at Gly2. The Cytoplasmic portion of the chain corresponds to 2 to 1470 (GAQVSRQNVG…DLNIANSIIA (1469 aa)). An amphipathic alpha-helix region spans residues 567–584 (PIEQNPVENYIDEVLNEV). Catalysis depends on for protease 2A activity residues His875 and Asp892. Residues Cys909 and Cys911 each contribute to the Zn(2+) site. Cys963 (for protease 2A activity) is an active-site residue. Zn(2+) contacts are provided by Cys969 and His971. The tract at residues 1095–1164 (SDSWLKKFTE…NLRAADSATQ (70 aa)) is membrane-binding. The oligomerization stretch occupies residues 1095-1228 (SDSWLKKFTE…PPGTGKSITT (134 aa)). Residues 1116-1120 (GNKIS) are RNA-binding. Residues 1188–1350 (EAKRIKVLYN…YKDTQGKLDV (163 aa)) form the SF3 helicase domain. Zn(2+) is bound by residues Cys1357, Cys1368, and Cys1373. The C4-type; degenerate zinc-finger motif lies at 1357-1373 (CNVNTKIGNAKCCPFVC). The interval 1400-1407 (EDKRRRQV) is RNA-binding. Residues 1411–1416 (MSAIFQ) are oligomerization. The stretch at 1471–1486 (IIANIISIAGIIFVIY) is an intramembrane region. Over 1487-2157 (KLFCSLQGPY…LLKHEWYEKF (671 aa)) the chain is Cytoplasmic. Tyr1496 is subject to O-(5'-phospho-RNA)-tyrosine. The 179-residue stretch at 1515–1693 (GPEEEFGRSI…FSAMLLRSYF (179 aa)) folds into the Peptidase C3 domain. Active-site for protease 3C activity residues include His1554, Glu1585, and Cys1661. A RdRp catalytic domain is found at 1925–2038 (DCIMAFDYTN…SYKYTLDMEA (114 aa)). Mg(2+) is bound by residues Asp1931 and Asp2024.

This sequence belongs to the picornaviruses polyprotein family. In terms of assembly, interacts with capsid protein VP1 and capsid protein VP3 to form heterotrimeric protomers. Interacts with capsid protein VP0, and capsid protein VP3 to form heterotrimeric protomers. Five protomers subsequently associate to form pentamers which serve as building blocks for the capsid. Interacts with capsid protein VP2, capsid protein VP3 and capsid protein VP4 following cleavage of capsid protein VP0. As to quaternary structure, interacts with capsid protein VP1 and capsid protein VP3 in the mature capsid. In terms of assembly, interacts with capsid protein VP0 and capsid protein VP1 to form heterotrimeric protomers. Five protomers subsequently associate to form pentamers which serve as building blocks for the capsid. Interacts with capsid protein VP4 in the mature capsid. Interacts with protein 2C; this interaction may be important for virion morphogenesis. Interacts with capsid protein VP1 and capsid protein VP3. As to quaternary structure, homodimer. In terms of assembly, homohexamer; forms a hexameric ring structure with 6-fold symmetry characteristic of AAA+ ATPases. Interacts (via N-terminus) with host RTN3 (via reticulon domain); this interaction is important for viral replication. Interacts with capsid protein VP3; this interaction may be important for virion morphogenesis. Interacts with protein 3CD. As to quaternary structure, homodimer. Interacts with host GBF1. Interacts (via GOLD domain) with host ACBD3 (via GOLD domain); this interaction allows the formation of a viral protein 3A/ACBD3 heterotetramer with a 2:2 stoichiometry, which will stimulate the recruitment of host PI4KB in order to synthesize PI4P at the viral RNA replication sites. In terms of assembly, interacts with RNA-directed RNA polymerase. Interacts with protein 3AB and with RNA-directed RNA polymerase. As to quaternary structure, interacts with Viral protein genome-linked and with protein 3CD. The cofactor is Mg(2+). Specific enzymatic cleavages in vivo by the viral proteases yield processing intermediates and the mature proteins. Post-translationally, myristoylation is required for the formation of pentamers during virus assembly. Further assembly of 12 pentamers and a molecule of genomic RNA generates the provirion. In terms of processing, during virion maturation, immature virions are rendered infectious following cleavage of VP0 into VP4 and VP2. This maturation seems to be an autocatalytic event triggered by the presence of RNA in the capsid and it is followed by a conformational change infectious virion. Myristoylation is required during RNA encapsidation and formation of the mature virus particle. Post-translationally, VPg is uridylylated by the polymerase into VPg-pUpU. This acts as a nucleotide-peptide primer for the genomic RNA replication.

The protein localises to the virion. Its subcellular location is the host cytoplasm. It is found in the host cytoplasmic vesicle membrane. It localises to the host nucleus. It catalyses the reaction a ribonucleoside 5'-triphosphate + H2O = a ribonucleoside 5'-diphosphate + phosphate + H(+). The catalysed reaction is Selective cleavage of Tyr-|-Gly bond in the picornavirus polyprotein.. It carries out the reaction RNA(n) + a ribonucleoside 5'-triphosphate = RNA(n+1) + diphosphate. The enzyme catalyses Selective cleavage of Gln-|-Gly bond in the poliovirus polyprotein. In other picornavirus reactions Glu may be substituted for Gln, and Ser or Thr for Gly.. With respect to regulation, replication or transcription is subject to high level of random mutations by the nucleotide analog ribavirin. Functionally, forms an icosahedral capsid of pseudo T=3 symmetry with capsid proteins VP2 and VP3. The capsid is 300 Angstroms in diameter, composed of 60 copies of each capsid protein and enclosing the viral positive strand RNA genome. Capsid protein VP1 mainly forms the vertices of the capsid. Capsid protein VP1 interacts with host cell receptor to provide virion attachment to target host cells. This attachment induces virion internalization. Tyrosine kinases are probably involved in the entry process. After binding to its receptor, the capsid undergoes conformational changes. Capsid protein VP1 N-terminus (that contains an amphipathic alpha-helix) and capsid protein VP4 are externalized. Together, they shape a pore in the host membrane through which viral genome is translocated to host cell cytoplasm. Forms an icosahedral capsid of pseudo T=3 symmetry with capsid proteins VP2 and VP3. The capsid is 300 Angstroms in diameter, composed of 60 copies of each capsid protein and enclosing the viral positive strand RNA genome. In terms of biological role, lies on the inner surface of the capsid shell. After binding to the host receptor, the capsid undergoes conformational changes. Capsid protein VP4 is released, Capsid protein VP1 N-terminus is externalized, and together, they shape a pore in the host membrane through which the viral genome is translocated into the host cell cytoplasm. Its function is as follows. Component of immature procapsids, which is cleaved into capsid proteins VP4 and VP2 after maturation. Allows the capsid to remain inactive before the maturation step. Functionally, cysteine protease that cleaves viral polyprotein and specific host proteins. It is responsible for the autocatalytic cleavage between the P1 and P2 regions, which is the first cleavage occurring in the polyprotein. Also cleaves the host translation initiation factor EIF4G1, in order to shut down the capped cellular mRNA translation. Inhibits the host nucleus-cytoplasm protein and RNA trafficking by cleaving host members of the nuclear pores. Counteracts stress granule formation probably by antagonizing its assembly or promoting its dissassembly. Plays an essential role in the virus replication cycle by acting as a viroporin. Creates a pore in the host endoplasmic reticulum and as a consequence releases Ca2+ in the cytoplasm of infected cell. In turn, high levels of cytoplasmic calcium may trigger membrane trafficking and transport of viral ER-associated proteins to viroplasms, sites of viral genome replication. In terms of biological role, induces and associates with structural rearrangements of intracellular membranes. Displays RNA-binding, nucleotide binding and NTPase activities. May play a role in virion morphogenesis and viral RNA encapsidation by interacting with the capsid protein VP3. Its function is as follows. Localizes the viral replication complex to the surface of membranous vesicles. Together with protein 3CD binds the Cis-Active RNA Element (CRE) which is involved in RNA synthesis initiation. Acts as a cofactor to stimulate the activity of 3D polymerase, maybe through a nucleid acid chaperone activity. Functionally, localizes the viral replication complex to the surface of membranous vesicles. It inhibits host cell endoplasmic reticulum-to-Golgi apparatus transport and causes the disassembly of the Golgi complex, possibly through GBF1 interaction. This would result in depletion of MHC, trail receptors and IFN receptors at the host cell surface. Plays an essential role in viral RNA replication by recruiting ACBD3 and PI4KB at the viral replication sites, thereby allowing the formation of the rearranged membranous structures where viral replication takes place. Acts as a primer for viral RNA replication and remains covalently bound to viral genomic RNA. VPg is uridylylated prior to priming replication into VPg-pUpU. The oriI viral genomic sequence may act as a template for this. The VPg-pUpU is then used as primer on the genomic RNA poly(A) by the RNA-dependent RNA polymerase to replicate the viral genome. During genome replication, the VPg-RNA linkage is removed by the host TDP2, thereby accelerating replication. During the late stage of the replication cycle, host TDP2 is excluded from sites of viral RNA synthesis and encapsidation, allowing for the generation of progeny virions. In terms of biological role, involved in the viral replication complex and viral polypeptide maturation. It exhibits protease activity with a specificity and catalytic efficiency that is different from protease 3C. Protein 3CD lacks polymerase activity. Protein 3CD binds to the 5'UTR of the viral genome. Its function is as follows. Major viral protease that mediates proteolytic processing of the polyprotein. Cleaves host EIF5B, contributing to host translation shutoff. Also cleaves host PABPC1, contributing to host translation shutoff. Functionally, replicates the viral genomic RNA on the surface of intracellular membranes. May form linear arrays of subunits that propagate along a strong head-to-tail interaction called interface-I. Covalently attaches UMP to a tyrosine of VPg, which is used to prime RNA synthesis. The positive stranded RNA genome is first replicated at virus induced membranous vesicles, creating a dsRNA genomic replication form. This dsRNA is then used as template to synthesize positive stranded RNA genomes. ss(+)RNA genomes are either translated, replicated or encapsidated. The chain is Genome polyprotein from Homo sapiens (Human).